We begin with the raw amino-acid sequence, 505 residues long: MKPTFPAIVTTAEMQAIEGAMFNGGLPIPALMEKVGQRLSHYLQAHFPTSQYPRVAVLAGPGHNGGDALVVARELWHRGYQVKLWQPFERLKPLTADHARYARFLGLPFVERVEALQEVDVIVDGLFGFGLERELTGELAHAIDEINTWPQPRVSIDVPSGLHSDTGAVLGTAIRADRTLCLGLWKRGLLVEEAQPWVGQGVLIPFDIPSVVIETALASAPRRYCLDDSCWQALPLSRSPITHKYQQGQLLLIGGSGQFGGSILLSALAARCTGVGMLVVAVPQSLKSLVLSRVPDAIVVGCPETPRGAIARLPEGLELGKFSAIACGPGLTPEAVSVVATVLRAETSLVLDADALNILATLSPWPLPSGTILTPHYGEFRRLFPDLVGTAGDRLDQVIAAARWSNAIVLLKGARTAIASARGDLWINPHSTPALARGGSGDVLTGLIGGLLAQQEALRATYGGVWWHAQAALEAEQQATSLGVYPEQLIAHLLPTLRRALAARV.

The segment at Met-1 to Ser-219 is NAD(P)H-hydrate epimerase. One can recognise a YjeF N-terminal domain in the interval Met-14–Glu-214. Residues His-63–Asp-67 form an NADPHX 1; for epimerase activity region. K(+) contacts are provided by Asn-64 and Asp-124. Positions Gly-128–Glu-134 are NADPHX 1; for epimerase activity. Position 157 (Asp-157) interacts with (6S)-NADPHX. Ser-160 lines the K(+) pocket. The YjeF C-terminal domain maps to Leu-226–Ala-500. The tract at residues Asp-227–Val-505 is ADP-dependent (S)-NAD(P)H-hydrate dehydratase. Residue Gly-330 coordinates (6S)-NADPHX. The tract at residues His-376 to Arg-382 is NADPHX 2; for dehydratase activity. Residues Lys-412–Thr-416 and Thr-432–Gly-441 contribute to the ADP site. Asp-442 contributes to the (6S)-NADPHX binding site.

It in the N-terminal section; belongs to the NnrE/AIBP family. This sequence in the C-terminal section; belongs to the NnrD/CARKD family. K(+) serves as cofactor.

It carries out the reaction (6S)-NADHX + ADP = AMP + phosphate + NADH + H(+). It catalyses the reaction (6S)-NADPHX + ADP = AMP + phosphate + NADPH + H(+). The catalysed reaction is (6R)-NADHX = (6S)-NADHX. The enzyme catalyses (6R)-NADPHX = (6S)-NADPHX. Its function is as follows. Bifunctional enzyme that catalyzes the epimerization of the S- and R-forms of NAD(P)HX and the dehydration of the S-form of NAD(P)HX at the expense of ADP, which is converted to AMP. This allows the repair of both epimers of NAD(P)HX, a damaged form of NAD(P)H that is a result of enzymatic or heat-dependent hydration. The sequence is that of Bifunctional NAD(P)H-hydrate repair enzyme Nnr (nnr) from Thermosynechococcus vestitus (strain NIES-2133 / IAM M-273 / BP-1).